The chain runs to 570 residues: Alpha-1,2-mannosyltransferase ALG9 (570 aa).

The tract at residues methionine 1–glycine 37 is disordered. Over residues serine 14 to tyrosine 25 the composition is skewed to low complexity. A run of 8 helical transmembrane segments spans residues alanine 129–leucine 149, tyrosine 160–proline 180, valine 208–tyrosine 228, alanine 237–tyrosine 257, phenylalanine 297–isoleucine 317, alanine 324–histidine 344, phenylalanine 349–proline 369, and serine 381–alanine 401. N-linked (GlcNAc...) asparagine glycosylation is present at asparagine 473.

It belongs to the glycosyltransferase 22 family.

The protein resides in the endoplasmic reticulum membrane. The catalysed reaction is an alpha-D-Man-(1-&gt;2)-alpha-D-Man-(1-&gt;2)-alpha-D-Man-(1-&gt;3)-[alpha-D-Man-(1-&gt;3)-alpha-D-Man-(1-&gt;6)]-beta-D-Man-(1-&gt;4)-beta-D-GlcNAc-(1-&gt;4)-alpha-D-GlcNAc-diphospho-di-trans,poly-cis-dolichol + a di-trans,poly-cis-dolichyl beta-D-mannosyl phosphate = an alpha-D-Man-(1-&gt;2)-alpha-D-Man-(1-&gt;2)-alpha-D-Man-(1-&gt;3)-[alpha-D-Man-(1-&gt;2)-alpha-D-Man-(1-&gt;3)-alpha-D-Man-(1-&gt;6)]-beta-D-Man-(1-&gt;4)-beta-D-GlcNAc-(1-&gt;4)-alpha-D-GlcNAc-diphospho-di-trans,poly-cis-dolichol + a di-trans,poly-cis-dolichyl phosphate + H(+). The enzyme catalyses an alpha-D-Man-(1-&gt;2)-alpha-D-Man-(1-&gt;2)-alpha-D-Man-(1-&gt;3)-[alpha-D-Man-(1-&gt;2)-alpha-D-Man-(1-&gt;3)-[alpha-D-Man-(1-&gt;6)]-alpha-D-Man-(1-&gt;6)]-beta-D-Man-(1-&gt;4)-beta-D-GlcNAc-(1-&gt;4)-alpha-D-GlcNAc-diphospho-di-trans,poly-cis-dolichol + a di-trans,poly-cis-dolichyl beta-D-mannosyl phosphate = an alpha-D-Man-(1-&gt;2)-alpha-D-Man-(1-&gt;2)-alpha-D-Man-(1-&gt;3)-[alpha-D-Man-(1-&gt;2)-alpha-D-Man-(1-&gt;3)-[alpha-D-Man-(1-&gt;2)-alpha-D-Man-(1-&gt;6)]-alpha-D-Man-(1-&gt;6)]-beta-D-Man-(1-&gt;4)-beta-D-GlcNAc-(1-&gt;4)-alpha-D-GlcNAc-diphospho-di-trans,poly-cis-dolichol + a di-trans,poly-cis-dolichyl phosphate + H(+). It participates in protein modification; protein glycosylation. Its function is as follows. Mannosyltransferase that operates in the biosynthetic pathway of dolichol-linked oligosaccharides, the glycan precursors employed in protein asparagine (N)-glycosylation. The assembly of dolichol-linked oligosaccharides begins on the cytosolic side of the endoplasmic reticulum membrane and finishes in its lumen. The sequential addition of sugars to dolichol pyrophosphate produces dolichol-linked oligosaccharides containing fourteen sugars, including two GlcNAcs, nine mannoses and three glucoses. Once assembled, the oligosaccharide is transferred from the lipid to nascent proteins by oligosaccharyltransferases. In the lumen of the endoplasmic reticulum, catalyzes the addition of the seventh and ninth alpha-1,2-linked mannose residues to Man(6)GlcNAc(2)-PP-dolichol and Man(8)GlcNAc(2)-PP-dolichol respectively. The chain is Alpha-1,2-mannosyltransferase ALG9 (ALG9) from Arabidopsis thaliana (Mouse-ear cress).